The sequence spans 211 residues: Large ribosomal subunit protein uL3 (211 aa).

N5-methylglutamine is present on glutamine 150.

It belongs to the universal ribosomal protein uL3 family. In terms of assembly, part of the 50S ribosomal subunit. Forms a cluster with proteins L14 and L19. Methylated by PrmB.

Its function is as follows. One of the primary rRNA binding proteins, it binds directly near the 3'-end of the 23S rRNA, where it nucleates assembly of the 50S subunit. The sequence is that of Large ribosomal subunit protein uL3 from Pseudomonas fluorescens (strain SBW25).